Reading from the N-terminus, the 1959-residue chain is Myosin-9 (1959 aa).

In terms of domain architecture, Myosin N-terminal SH3-like spans 27–77; it reads AAKKLVWVPSEKSGFEAASLKEEVGDEAIVELAENGKKVKVNKDDIQKMNP. Residues 81-776 form the Myosin motor domain; sequence SKVEDMAELT…VLAHLEEERD (696 aa). Residue 174–181 coordinates ATP; the sequence is GESGAGKT. Residues 654–676 form an actin-binding region; the sequence is LAKLMATLRNTNPNFVRCIIPNH. One can recognise an IQ domain in the interval 779 to 808; it reads ITDVIIGFQACCRGYLARKAFAKRQQQLTA. Residues 837–1925 are a coiled coil; sequence LLQVSRQEEE…LKSKLRRGDL (1089 aa). Disordered regions lie at residues 1118–1168, 1694–1717, 1879–1917, and 1936–1959; these read EDLE…REQE, RAKR…SGKG, LEEA…SSLK, and KGTG…KATE. Basic and acidic residues-rich tracts occupy residues 1122–1148 and 1694–1704; these read SERA…KTEL and RAKRQAQQERD. The span at 1947-1959 shows a compositional bias: basic and acidic residues; that stretch reads DGKAEAGDAKATE.

This sequence belongs to the TRAFAC class myosin-kinesin ATPase superfamily. Myosin family. Myosin is a hexameric protein that consists of 2 heavy chain subunits (MHC), 2 alkali light chain subunits (MLC) and 2 regulatory light chain subunits (MLC-2). As to expression, expressed in fibroblasts, brain, lung, kidney, spleen, and skeletal, cardiac and smooth muscles.

The protein localises to the cytoplasm. The protein resides in the cytoskeleton. It is found in the cell cortex. It localises to the cytoplasmic vesicle. Its subcellular location is the secretory vesicle. The protein localises to the cortical granule. Functionally, cellular myosin that appears to play a role in cytokinesis, cell shape, and specialized functions such as secretion and capping. This Gallus gallus (Chicken) protein is Myosin-9 (MYH9).